A 609-amino-acid chain; its full sequence is MHAYRTHTCGALRASDTGASVRVSGWIHRKRDHGGLVFIDLRDHYGLTQLVLHPETPGFDVVERLRAESVIKIDGEVVARDAAAVNPNLPTGEIEIRVSAVEVLSEAAELPLPVFGEPDYPEEIRLKHRYLDLRRETLHKNIVLRSRVIQSIRSRMFAQGFNEFQTPILTASSPEGARDFLVPSRLHPGKFYALPQAPQQFKQLLMVSGFDRYFQIAPCFRDEDLRADRSLEFYQLDVEMSFVTQEDVFAAIEPVMHGVFEEFSAGKPVSPIDGVHTFTNDFGATLEHRGFERLTYAQSMAWYGSDKPDLRNPIKMQDVSEHFRDGGFGLFAKILGADPKNRVWAIPAPTGGSRAFCDRMNSWAQGEGQPGLGYAFFSKDQNGWGGPIAKNLGEGFQPIADQLGLTHDDAVFFVAGDPAVFAKFAGLARTRVGTELKLVDEEQFKFCWIVDFPMFEWNEDEKKVDFSHNPFSMPQGGLEALETQDPLTIRAYQYDIVCNGYELCSGAIRNHKPEIMLKAFEVAGYGAEVVEEQFGGMLNAFRYGAPPHGGLAPGIDRIVMLLAEQVAIREVIAFPLNQQGQDLLMNAPAEAQDRQYKELYIRSAPPIKV.

Position 175 (Glu175) interacts with L-aspartate. The interval 199–202 (QQFK) is aspartate. L-aspartate contacts are provided by Arg221 and His468. Position 221–223 (221–223 (RDE)) interacts with ATP. An ATP-binding site is contributed by Glu502. Arg509 serves as a coordination point for L-aspartate. 554–557 (GIDR) is an ATP binding site.

Belongs to the class-II aminoacyl-tRNA synthetase family. Type 1 subfamily. In terms of assembly, homodimer.

Its subcellular location is the cytoplasm. It catalyses the reaction tRNA(Asx) + L-aspartate + ATP = L-aspartyl-tRNA(Asx) + AMP + diphosphate. Its function is as follows. Aspartyl-tRNA synthetase with relaxed tRNA specificity since it is able to aspartylate not only its cognate tRNA(Asp) but also tRNA(Asn). Reaction proceeds in two steps: L-aspartate is first activated by ATP to form Asp-AMP and then transferred to the acceptor end of tRNA(Asp/Asn). This Caulobacter sp. (strain K31) protein is Aspartate--tRNA(Asp/Asn) ligase.